The following is a 1691-amino-acid chain: ADAMTS-like protein 3 (1691 aa).

The signal sequence occupies residues 1–26 (MASWTSPWWVLIGMVFMHSPLPQTTA). One can recognise a TSP type-1 1 domain in the interval 75–124 (DGNWDAWGDWSDCSRTCGGGASYSLRRCLTGRNCEGQNIRYKTCSNHDCP). 3 disulfide bridges follow: C87–C118, C91–C123, and C102–C108. N293 carries N-linked (GlcNAc...) asparagine glycosylation. 3 consecutive TSP type-1 domains span residues 418-468 (PLPR…APKP), 478-535 (DCPK…IPCY), and 564-626 (EEPT…EACD). Disulfide bonds link C576–C620, C580–C625, and C591–C609. The N-linked (GlcNAc...) asparagine glycan is linked to N681. TSP type-1 domains are found at residues 703 to 760 (CPPR…FDCP), 763 to 818 (WHIE…ARTD), and 819 to 881 (CPPH…PECS). Residue N797 is glycosylated (N-linked (GlcNAc...) asparagine). Disulfide bonds link C831/C875, C835/C880, and C846/C863. The region spanning 896 to 992 (PQILSVQRVY…IAGSAQETVV (97 aa)) is the Ig-like C2-type 1 domain. 2 N-linked (GlcNAc...) asparagine glycosylation sites follow: N915 and N927. Residues C934 and C982 are joined by a disulfide bond. N-linked (GlcNAc...) asparagine glycosylation is present at N1102. The interval 1146 to 1184 (PPAAQLRGETGSVSQSSHAKNSGKLTFKPKGPVLMRQSQ) is disordered. Over residues 1156–1169 (GSVSQSSHAKNSGK) the composition is skewed to polar residues. An Ig-like C2-type 2 domain is found at 1185-1279 (PPSISFNKTI…GSDVESSSVL (95 aa)). A glycan (N-linked (GlcNAc...) asparagine) is linked at N1191. The cysteines at positions 1215 and 1263 are disulfide-linked. Residues N1292, N1316, N1330, N1343, N1349, N1356, N1432, N1516, N1574, and N1591 are each glycosylated (N-linked (GlcNAc...) asparagine). An Ig-like C2-type 3 domain is found at 1296–1378 (PEHNHLSVVV…ATNALGKAVA (83 aa)). The cysteines at positions 1321 and 1367 are disulfide-linked. TSP type-1 domains are found at residues 1424-1482 (QEPF…NIRD) and 1483-1545 (CPAR…HPCV). The region spanning 1597–1644 (CDVCWHTGPWKPCTAACGRGFQSRKVDCIHTRSCKPVAKRHCVQKKKP) is the TSP type-1 10 domain. Residues 1655–1691 (CDRDCTDTTHYCMFVKHLNLCSLDRYKQRCCQSCQEG) form the PLAC domain.

Glycosylated. Can be O-fucosylated by POFUT2 on a serine or a threonine residue found within the consensus sequence C1-X(2)-(S/T)-C2-G of the TSP type-1 repeat domains where C1 and C2 are the first and second cysteine residue of the repeat, respectively. Fucosylated repeats can then be further glycosylated by the addition of a beta-1,3-glucose residue by the glucosyltransferase, B3GALTL. Fucosylation mediates the efficient secretion of ADAMTS family members. Can also be C-glycosylated with one or two mannose molecules on tryptophan residues within the consensus sequence W-X-X-W of the TPRs, and N-glycosylated. These other glycosylations can also facilitate secretion. Expressed in epithelial cells of the colon, fallopian tube, skin, breast, prostate, epididymis, liver, pancreatic islets and bile ducts, as well as by vascular endothelial cells, smooth muscle cells, fibroblasts, cortical and ganglionic neurons and cardiac myocytes. Also expressed by malignant epithelial cells in colon cancer, as well as breast, prostate, renal and skin tumors. Expression is significantly reduced in colon cancer compared to normal colon.

The protein localises to the secreted. Its subcellular location is the extracellular space. It localises to the extracellular matrix. The protein is ADAMTS-like protein 3 (ADAMTSL3) of Homo sapiens (Human).